We begin with the raw amino-acid sequence, 341 residues long: Terpene synthase 9 (341 aa).

Positions 81 to 86 (DDILDS) match the DDxx(x)D/E motif motif. The short motif at 222 to 230 (NDMASYCKE) is the NDxxSxxxD/E motif element.

Belongs to the terpene synthase family.

The catalysed reaction is (2E,6E)-farnesyl diphosphate = (1S,2S,4R)-beta-elemene + diphosphate. The enzyme catalyses (2E,6E)-farnesyl diphosphate = germacrene D + diphosphate. Functionally, terpene synthase that converts its substrate farnesyl diphosphate (FPP) into the sesquiterpenes beta-elemene, germacrene D and a yet unidentified sesquiterpene. This Dictyostelium purpureum (Slime mold) protein is Terpene synthase 9.